Reading from the N-terminus, the 338-residue chain is 1-aminocyclopropane-1-carboxylate deaminase (338 aa).

Residue lysine 51 is modified to N6-(pyridoxal phosphate)lysine. The Nucleophile role is filled by serine 78.

It belongs to the ACC deaminase/D-cysteine desulfhydrase family. As to quaternary structure, homotrimer. Pyridoxal 5'-phosphate serves as cofactor.

The catalysed reaction is 1-aminocyclopropane-1-carboxylate + H2O = 2-oxobutanoate + NH4(+). Catalyzes a cyclopropane ring-opening reaction, the irreversible conversion of 1-aminocyclopropane-1-carboxylate (ACC) to ammonia and alpha-ketobutyrate. Allows growth on ACC as a nitrogen source. This chain is 1-aminocyclopropane-1-carboxylate deaminase, found in Burkholderia pseudomallei (strain 1106a).